The sequence spans 79 residues: Scutelatoxin (79 aa).

The signal sequence occupies residues 1-21; sequence MKTLLLTLVVMTIMCLDLGYT. 4 cysteine pairs are disulfide-bonded: cysteine 24–cysteine 41, cysteine 34–cysteine 59, cysteine 63–cysteine 71, and cysteine 72–cysteine 77.

This sequence belongs to the three-finger toxin family. Short-chain subfamily. In terms of tissue distribution, expressed by the venom gland.

The protein localises to the secreted. This is Scutelatoxin from Oxyuranus scutellatus scutellatus (Australian taipan).